The primary structure comprises 115 residues: Protein translation factor SUI1 homolog (115 aa).

It belongs to the SUI1 family.

Probably involved in translation. The chain is Protein translation factor SUI1 homolog (TIF) from Zea mays (Maize).